Reading from the N-terminus, the 577-residue chain is MFS-type transporter pgmG (577 aa).

Residues 1–32 form a disordered region; it reads MSETVTQTETDQRPATARSLGAEEKEAKSDEQ. Over residues 21 to 31 the composition is skewed to basic and acidic residues; it reads GAEEKEAKSDE. The next 8 membrane-spanning stretches (helical) occupy residues 45–65, 84–104, 111–131, 141–161, 174–194, 218–238, 259–279, and 292–312; these read FIVI…NTIV, WLSV…SKIY, WLYL…GAAP, ALAG…LSVN, TGLT…GFAV, PLTV…LFML, LGTI…NFGG, and CFVV…YCIG. N317 carries N-linked (GlcNAc...) asparagine glycosylation. Residues 330–350 traverse the membrane as a helical segment; that stretch reads FIILFVQTASVATVFFVPIYF. N360 carries N-linked (GlcNAc...) asparagine glycosylation. 5 consecutive transmembrane segments (helical) span residues 363–383, 395–415, 426–446, 457–477, and 532–552; these read AIDA…AMIL, MPWY…MYTI, GYMI…FAVA, VATG…LAIA, and ISQV…LAIF.

It belongs to the major facilitator superfamily. TCR/Tet family.

Its subcellular location is the membrane. In terms of biological role, MFS-type transporter; part of the gene cluster that mediates the biosynthesis of pleosporalin A, ascomycone A, as well as a third cryptic naphthoquinone derived pigment, all responsible for the coloration of conidia. Seems not to be involved in pigment biosynthesis although its expression is regulated by the cluster-specific transcription factor pgmR. The polypeptide is MFS-type transporter pgmG (Aspergillus terreus (strain NIH 2624 / FGSC A1156)).